A 608-amino-acid polypeptide reads, in one-letter code: Chaperone protein HtpG (608 aa).

The segment at 1 to 332 (MQFQTEVNQL…VEDLPLNVSR (332 aa)) is a; substrate-binding. The segment at 333–536 (EILQENQILK…KNKPDFAMQQ (204 aa)) is b. The c stretch occupies residues 537–608 (LLKQMGQEQN…LTKIINKAFS (72 aa)).

It belongs to the heat shock protein 90 family. Homodimer.

It is found in the cytoplasm. Molecular chaperone. Has ATPase activity. The polypeptide is Chaperone protein HtpG (Campylobacter jejuni subsp. jejuni serotype O:2 (strain ATCC 700819 / NCTC 11168)).